The following is a 224-amino-acid chain: UPF0173 metal-dependent hydrolase EAT1b_0495 (224 aa).

It belongs to the UPF0173 family.

In Exiguobacterium sp. (strain ATCC BAA-1283 / AT1b), this protein is UPF0173 metal-dependent hydrolase EAT1b_0495.